Here is a 320-residue protein sequence, read N- to C-terminus: tRNA U34 carboxymethyltransferase (320 aa).

Residues K89, W103, K108, G128, 150–152, 179–180, M194, Y198, and R313 each bind carboxy-S-adenosyl-L-methionine; these read DPT and IE.

This sequence belongs to the class I-like SAM-binding methyltransferase superfamily. CmoB family. In terms of assembly, homotetramer.

It carries out the reaction carboxy-S-adenosyl-L-methionine + 5-hydroxyuridine(34) in tRNA = 5-carboxymethoxyuridine(34) in tRNA + S-adenosyl-L-homocysteine + H(+). Catalyzes carboxymethyl transfer from carboxy-S-adenosyl-L-methionine (Cx-SAM) to 5-hydroxyuridine (ho5U) to form 5-carboxymethoxyuridine (cmo5U) at position 34 in tRNAs. In Glaesserella parasuis serovar 5 (strain SH0165) (Haemophilus parasuis), this protein is tRNA U34 carboxymethyltransferase.